A 186-amino-acid polypeptide reads, in one-letter code: ATP synthase subunit b (186 aa).

Residues 5-25 (LILNLLVLLAPAAVFAAGGGH) traverse the membrane as a helical segment.

The protein belongs to the ATPase B chain family. In terms of assembly, F-type ATPases have 2 components, F(1) - the catalytic core - and F(0) - the membrane proton channel. F(1) has five subunits: alpha(3), beta(3), gamma(1), delta(1), epsilon(1). F(0) has three main subunits: a(1), b(2) and c(10-14). The alpha and beta chains form an alternating ring which encloses part of the gamma chain. F(1) is attached to F(0) by a central stalk formed by the gamma and epsilon chains, while a peripheral stalk is formed by the delta and b chains.

It localises to the cell inner membrane. In terms of biological role, f(1)F(0) ATP synthase produces ATP from ADP in the presence of a proton or sodium gradient. F-type ATPases consist of two structural domains, F(1) containing the extramembraneous catalytic core and F(0) containing the membrane proton channel, linked together by a central stalk and a peripheral stalk. During catalysis, ATP synthesis in the catalytic domain of F(1) is coupled via a rotary mechanism of the central stalk subunits to proton translocation. Functionally, component of the F(0) channel, it forms part of the peripheral stalk, linking F(1) to F(0). The polypeptide is ATP synthase subunit b (Bdellovibrio bacteriovorus (strain ATCC 15356 / DSM 50701 / NCIMB 9529 / HD100)).